The following is a 177-amino-acid chain: Bifunctional protein PyrR (177 aa).

The PRPP-binding motif lies at 101-113; it reads IILIDDVLYTGRT.

This sequence belongs to the purine/pyrimidine phosphoribosyltransferase family. PyrR subfamily.

It catalyses the reaction UMP + diphosphate = 5-phospho-alpha-D-ribose 1-diphosphate + uracil. Functionally, regulates the transcription of the pyrimidine nucleotide (pyr) operon in response to exogenous pyrimidines. In terms of biological role, also displays a weak uracil phosphoribosyltransferase activity which is not physiologically significant. The protein is Bifunctional protein PyrR of Endomicrobium trichonymphae.